We begin with the raw amino-acid sequence, 158 residues long: MDHQLTREESQRLMHLLKLPMEQYGNFPLMRKAFLRACKIVHPDKGGSDELSQELISLYRRLEESLPCLSTQDFIETDKVCLIEKIDYLTDWINCNFENCNKCLYCRLWNNHKSDPPFPKVWGYCLCYKCYIIWFGLEPCHFAFQSWMQIIALTPFCA.

Methionine 1 carries the N-acetylmethionine; by host modification. The J domain occupies 12–75 (RLMHLLKLPM…LPCLSTQDFI (64 aa)). The C4-type; atypical zinc finger occupies 95 to 106 (CNFENCNKCLYC). The segment at 112–130 (HKSDPPFPKVWGYCLCYKC) adopts an H1C3-type; atypical zinc-finger fold.

As to quaternary structure, interacts with host PPP2R1A; the interaction inhibits PP2A activity.

It is found in the host cytoplasm. The protein localises to the host nucleus. Functionally, promotes efficient viral genome replication by accelerating both G1 and S phase progression of the cell cycle. Inhibits host PP2A by binding to the A subunit, thereby displacing lower affinity regulatory B subunit. Inactivation of PP2A in turn results in the transactivation of cyclin A and cyclin D1 promoters. Late during the infection cycle, ST may induce dephosphorylation of host MTOR, leading to the inhibition of cap-dependent translation. May establish and maintain high levels of viral genomes during persistent infection in cell culture. In Mus musculus (Mouse), this protein is Small t antigen.